The following is a 265-amino-acid chain: Putative 2-amino-3,7-dideoxy-D-threo-hept-6-ulosonate synthase 2 (265 aa).

D27 (proton acceptor) is an active-site residue. 1-deoxy-D-threo-hexo-2,5-diulose 6-phosphate is bound by residues 27-31 (DHGVS) and 147-149 (YPR). The Proton donor role is filled by Y147. The Schiff-base intermediate with substrate role is filled by K177. 1-deoxy-D-threo-hexo-2,5-diulose 6-phosphate contacts are provided by residues 202-203 (GG) and 230-231 (GR).

It belongs to the DeoC/FbaB aldolase family. ADHS subfamily. As to quaternary structure, homodecamer.

It carries out the reaction 1-deoxy-D-threo-hexo-2,5-diulose 6-phosphate + L-aspartate 4-semialdehyde = 2,3-dioxopropyl phosphate + 2-amino-2,3,7-trideoxy-D-lyxo-hept-6-ulosonate. Catalyzes a transaldol reaction between 6-deoxy-5-ketofructose 1-phosphate (DKFP) and L-aspartate semialdehyde (ASA) with an elimination of hydroxypyruvaldehyde phosphate to yield 2-amino-3,7-dideoxy-D-threo-hept-6-ulosonate (ADH). Plays a key role in an alternative pathway of the biosynthesis of 3-dehydroquinate (DHQ), which is involved in the canonical pathway for the biosynthesis of aromatic amino acids. This is Putative 2-amino-3,7-dideoxy-D-threo-hept-6-ulosonate synthase 2 from Archaeoglobus fulgidus (strain ATCC 49558 / DSM 4304 / JCM 9628 / NBRC 100126 / VC-16).